We begin with the raw amino-acid sequence, 152 residues long: Phospholipase A2 (152 aa).

A signal peptide spans 1-20; sequence MAACHRILLLLSVAVASGAA. 8 disulfide bridges follow: cysteine 39–cysteine 96, cysteine 53–cysteine 142, cysteine 55–cysteine 70, cysteine 69–cysteine 124, cysteine 75–cysteine 149, cysteine 76–cysteine 117, cysteine 85–cysteine 110, and cysteine 103–cysteine 115. Glycine 56 and glycine 58 together coordinate Ca(2+). Histidine 73 is a catalytic residue. Position 74 (aspartate 74) interacts with Ca(2+). Aspartate 118 is a catalytic residue.

Belongs to the phospholipase A2 family. As to expression, expressed by the venom gland. Heavily expressed in the venom gland transcriptome.

Its subcellular location is the secreted. The catalysed reaction is a 1,2-diacyl-sn-glycero-3-phosphocholine + H2O = a 1-acyl-sn-glycero-3-phosphocholine + a fatty acid + H(+). Its function is as follows. PA2 catalyzes the calcium-dependent hydrolysis of the 2-acyl groups in 3-sn-phosphoglycerides. This chain is Phospholipase A2, found in Meiacanthus atrodorsalis (Forktail blenny).